A 168-amino-acid polypeptide reads, in one-letter code: Skp-like protein (168 aa).

A signal peptide spans 1–22 (MRKFTQFVLITAAIMAAPSAFA).

This sequence belongs to the Skp family.

This Pseudomonas aeruginosa (strain ATCC 15692 / DSM 22644 / CIP 104116 / JCM 14847 / LMG 12228 / 1C / PRS 101 / PAO1) protein is Skp-like protein.